A 122-amino-acid polypeptide reads, in one-letter code: Large ribosomal subunit protein bL12 (122 aa).

Belongs to the bacterial ribosomal protein bL12 family. Homodimer. Part of the ribosomal stalk of the 50S ribosomal subunit. Forms a multimeric L10(L12)X complex, where L10 forms an elongated spine to which 2 to 4 L12 dimers bind in a sequential fashion. Binds GTP-bound translation factors.

In terms of biological role, forms part of the ribosomal stalk which helps the ribosome interact with GTP-bound translation factors. Is thus essential for accurate translation. The sequence is that of Large ribosomal subunit protein bL12 from Buchnera aphidicola subsp. Schizaphis graminum (strain Sg).